The sequence spans 323 residues: NADH-cytochrome b5 reductase 2 (323 aa).

Residues 32-48 (LAPIYVAVGLTGLGVGL) form a helical membrane-spanning segment. Residues 72–177 (QGWVDLKLAQ…KGPIPKYPWE (106 aa)) form the FAD-binding FR-type domain. 180 to 215 (KHKHICLIAGGTGITPMYQLARKIFKDPEDQTKVTL) lines the FAD pocket.

It belongs to the flavoprotein pyridine nucleotide cytochrome reductase family. The cofactor is FAD.

The protein resides in the mitochondrion outer membrane. It catalyses the reaction 2 Fe(III)-[cytochrome b5] + NADH = 2 Fe(II)-[cytochrome b5] + NAD(+) + H(+). Its function is as follows. May mediate the reduction of outer membrane cytochrome b5. The protein is NADH-cytochrome b5 reductase 2 (mcr1) of Neosartorya fischeri (strain ATCC 1020 / DSM 3700 / CBS 544.65 / FGSC A1164 / JCM 1740 / NRRL 181 / WB 181) (Aspergillus fischerianus).